Consider the following 482-residue polypeptide: Cilia- and flagella-associated protein 53 (482 aa).

3 coiled-coil regions span residues 9-40 (DARI…AVAE), 67-124 (ADLN…QALA), and 152-413 (IEER…AKDA). A disordered region spans residues 462-482 (VNQTLSSTDPPVWHGRRKFDW).

The protein belongs to the CFAP53 family.

It is found in the cell projection. Its subcellular location is the cilium. It localises to the flagellum. In terms of biological role, may play a role in filopodium movement. The chain is Cilia- and flagella-associated protein 53 from Chlamydomonas reinhardtii (Chlamydomonas smithii).